Reading from the N-terminus, the 719-residue chain is Glutamate--tRNA ligase, cytoplasmic (719 aa).

Residue Ser93 coordinates ATP. Positions 176-205 are disordered; that stretch reads SGKPVAAPKSKDSQQAVKGDGQDKGKPEVD. The span at 195–204 shows a compositional bias: basic and acidic residues; the sequence is DGQDKGKPEV. Residue 217–219 coordinates L-glutamate; the sequence is RFA. Positions 220–230 match the 'HIGH' region motif; sequence PEPSGYLHIGH. His227 provides a ligand contact to ATP. L-glutamate is bound by residues 393 to 397 and Arg411; that span reads YDFAC. Residues Glu414 and 448–452 contribute to the ATP site; that span reads LLSKR. The 'KMSKS' region motif lies at 448–452; that stretch reads LLSKR.

It belongs to the class-I aminoacyl-tRNA synthetase family. Glutamate--tRNA ligase type 2 subfamily. In terms of assembly, interacts with GLN2, COL4 and RPP13L4/ZAR1.

The protein localises to the cytoplasm. It localises to the cytosol. The catalysed reaction is tRNA(Glu) + L-glutamate + ATP = L-glutamyl-tRNA(Glu) + AMP + diphosphate. Its function is as follows. Catalyzes the attachment of glutamate to tRNA(Glu) in a two-step reaction: glutamate is first activated by ATP to form Glu-AMP and then transferred to the acceptor end of tRNA(Glu). The sequence is that of Glutamate--tRNA ligase, cytoplasmic from Arabidopsis thaliana (Mouse-ear cress).